Reading from the N-terminus, the 148-residue chain is 1,4-dihydroxy-2-naphthoyl-CoA hydrolase (148 aa).

The active site involves D15.

This sequence belongs to the 4-hydroxybenzoyl-CoA thioesterase family. DHNA-CoA hydrolase subfamily.

It carries out the reaction 1,4-dihydroxy-2-naphthoyl-CoA + H2O = 1,4-dihydroxy-2-naphthoate + CoA + H(+). It functions in the pathway cofactor biosynthesis; phylloquinone biosynthesis. It participates in quinol/quinone metabolism; 1,4-dihydroxy-2-naphthoate biosynthesis; 1,4-dihydroxy-2-naphthoate from chorismate: step 7/7. In terms of biological role, catalyzes the hydrolysis of 1,4-dihydroxy-2-naphthoyl-CoA (DHNA-CoA) to 1,4-dihydroxy-2-naphthoate (DHNA), a reaction involved in phylloquinone (vitamin K1) biosynthesis. In Nostoc punctiforme (strain ATCC 29133 / PCC 73102), this protein is 1,4-dihydroxy-2-naphthoyl-CoA hydrolase.